The chain runs to 1023 residues: RTX-I toxin determinant A from serotypes 1/9 (1023 aa).

3 helical membrane-spanning segments follow: residues 226–256 (NNLP…ILSN), 297–326 (STTA…ADKF), and 367–406 (INSV…SGIL). 6 Hemolysin-type calcium-binding repeats span residues 730 to 747 (FGSR…DDEI), 748 to 765 (YGND…NDVI), 766 to 783 (HGGD…NDRL), 784 to 801 (IGGK…DDEL), 812 to 829 (LGGA…TNLF), and 830 to 847 (DGGV…KDIY).

The protein belongs to the RTX prokaryotic toxin (TC 1.C.11) family. Palmitoylated by ApxIC. The toxin only becomes active when modified.

The protein resides in the secreted. Its subcellular location is the host cell membrane. In terms of biological role, one of the virulence factors of A.pleuropneumoniae, which has a strong hemolytic activity and is cytotoxic for alveolar macrophages and neutrophils. In Actinobacillus pleuropneumoniae (Haemophilus pleuropneumoniae), this protein is RTX-I toxin determinant A from serotypes 1/9 (apxIA).